We begin with the raw amino-acid sequence, 183 residues long: U3 small nucleolar ribonucleoprotein protein imp3 (183 aa).

Residues 108–174 (RRLPVVMRNI…IKKHVMDYNN (67 aa)) form the S4 RNA-binding domain.

It belongs to the universal ribosomal protein uS4 family. In terms of assembly, component of a heterotrimeric complex containing imp3, imp4 and mpp10.

It localises to the nucleus. The protein localises to the nucleolus. Its function is as follows. Component of the U3 small nucleolar ribonucleoprotein. Required for the early cleavages at sites A0, A1 and A2 during 18S ribosomal pre-RNA processing. This Caenorhabditis elegans protein is U3 small nucleolar ribonucleoprotein protein imp3.